The sequence spans 424 residues: MPSNSTPANEEKEEESEKIQKSPVDTPHTPNGSVSDNEENETSSTGEVTRCVCGIVESDDEASDGGLYIQCDQCSVWQHGNCVGFADESEVPEVYYCEICHPEFHKVYQRGRGAKQSKYLGNGKPIEASQTEESSSTPPSPATKKSSKQRLTMNSRDAALDYEEYLAIAKEKSLIPRRSRGRTSSKSLSPPAPQDESQGTEINLKQKIEEENDEILEDSKESKDENEENKETSTTNVAETDAPEEETVDTVEEIADEEKHSVKEESGEASPQSSQQSTITSISTTTRSTRKAKREAAAEDKADLPAAVAPKPSKTRKVGGRRGKSSSNDNHRIPQLHPDGTFVETITKPKGLHSRITMTEMRRRVASMLEYIGHIQVEMAAQSAGNQSSTKSSKEGPEEEKETLRMVDNLTRDLLHWEQRFSRT.

Disordered regions lie at residues Met-1–Thr-49, Ser-117–Ser-155, Lys-170–Thr-341, and Ala-381–Arg-405. Residues Val-48 to Glu-103 form a PHD-type zinc finger. A compositionally biased stretch (low complexity) spans Glu-127–Thr-137. A Phosphoserine modification is found at Ser-187. Acidic residues predominate over residues Asp-241–Asp-256. Positions Glu-257–Ser-266 are enriched in basic and acidic residues. Low complexity predominate over residues Gln-272 to Arg-287. Positions Arg-294 to Asp-303 are enriched in basic and acidic residues. Residues Ser-313–Lys-324 are compositionally biased toward basic residues. Positions Ser-392 to Arg-405 are enriched in basic and acidic residues.

It is found in the cytoplasm. The protein localises to the nucleus. Its function is as follows. Could be a component of the RPD3C(L) histone deacetylase complex (HDAC). The sequence is that of Putative histone deacetylase complex subunit cti6 (cti6) from Schizosaccharomyces pombe (strain 972 / ATCC 24843) (Fission yeast).